Consider the following 117-residue polypeptide: Large ribosomal subunit protein bL17 (117 aa).

The protein belongs to the bacterial ribosomal protein bL17 family. In terms of assembly, part of the 50S ribosomal subunit. Contacts protein L32.

In Dehalococcoides mccartyi (strain ATCC BAA-2100 / JCM 16839 / KCTC 5957 / BAV1), this protein is Large ribosomal subunit protein bL17.